A 425-amino-acid polypeptide reads, in one-letter code: Arogenate dehydratase 5, chloroplastic (425 aa).

A chloroplast-targeting transit peptide spans M1–R38. Positions R127 to R304 constitute a Prephenate dehydratase domain. The 92-residue stretch at V320 to P411 folds into the ACT domain.

As to expression, expressed in roots, leaves, stems, flowers and siliques. More abundant in stems and roots.

Its subcellular location is the plastid. The protein resides in the chloroplast stroma. The catalysed reaction is L-arogenate + H(+) = L-phenylalanine + CO2 + H2O. It functions in the pathway amino-acid biosynthesis; L-phenylalanine biosynthesis; L-phenylalanine from L-arogenate: step 1/1. Functionally, converts the prephenate produced from the shikimate-chorismate pathway into phenylalanine. This chain is Arogenate dehydratase 5, chloroplastic, found in Arabidopsis thaliana (Mouse-ear cress).